Reading from the N-terminus, the 254-residue chain is 2-dehydro-3-deoxy-D-gluconate 5-dehydrogenase (254 aa).

The active-site Proton acceptor is the Y159.

The protein belongs to the short-chain dehydrogenases/reductases (SDR) family.

It carries out the reaction 2-dehydro-3-deoxy-D-gluconate + NAD(+) = 3-deoxy-D-glycero-2,5-hexodiulosonate + NADH + H(+). Involved in the degradation of 3,6-anhydro-L-galactose, which is the major monomeric sugar of red macroalgae. Catalyzes the fourth step of the pathway, the reduction of 3-deoxy-D-glycero-2,5-hexodiulosonate (L-DDGal) to 2-dehydro-3-deoxy-D-gluconate (KDG). The protein is 2-dehydro-3-deoxy-D-gluconate 5-dehydrogenase of Pseudoalteromonas atlantica (strain T6c / ATCC BAA-1087).